A 133-amino-acid chain; its full sequence is Small ribosomal subunit protein uS12c (133 aa).

Belongs to the universal ribosomal protein uS12 family. Part of the 30S ribosomal subunit.

The protein localises to the plastid. It is found in the chloroplast. With S4 and S5 plays an important role in translational accuracy. Located at the interface of the 30S and 50S subunits. The sequence is that of Small ribosomal subunit protein uS12c (rps12) from Chlamydomonas reinhardtii (Chlamydomonas smithii).